Here is a 298-residue protein sequence, read N- to C-terminus: ATP synthase gamma chain (298 aa).

The protein belongs to the ATPase gamma chain family. As to quaternary structure, F-type ATPases have 2 components, CF(1) - the catalytic core - and CF(0) - the membrane proton channel. CF(1) has five subunits: alpha(3), beta(3), gamma(1), delta(1), epsilon(1). CF(0) has three main subunits: a, b and c.

The protein localises to the cell inner membrane. In terms of biological role, produces ATP from ADP in the presence of a proton gradient across the membrane. The gamma chain is believed to be important in regulating ATPase activity and the flow of protons through the CF(0) complex. This is ATP synthase gamma chain from Desulforapulum autotrophicum (strain ATCC 43914 / DSM 3382 / VKM B-1955 / HRM2) (Desulfobacterium autotrophicum).